The sequence spans 313 residues: Beta-ketoacyl-[acyl-carrier-protein] synthase III (313 aa).

Residues C112 and H238 contribute to the active site. Residues 239–243 (QANIR) are ACP-binding. N268 is a catalytic residue.

It belongs to the thiolase-like superfamily. FabH family. In terms of assembly, homodimer.

It localises to the cytoplasm. The enzyme catalyses malonyl-[ACP] + acetyl-CoA + H(+) = 3-oxobutanoyl-[ACP] + CO2 + CoA. The protein operates within lipid metabolism; fatty acid biosynthesis. Its function is as follows. Catalyzes the condensation reaction of fatty acid synthesis by the addition to an acyl acceptor of two carbons from malonyl-ACP. Catalyzes the first condensation reaction which initiates fatty acid synthesis and may therefore play a role in governing the total rate of fatty acid production. Possesses both acetoacetyl-ACP synthase and acetyl transacylase activities. Its substrate specificity determines the biosynthesis of branched-chain and/or straight-chain of fatty acids. The polypeptide is Beta-ketoacyl-[acyl-carrier-protein] synthase III (Staphylococcus saprophyticus subsp. saprophyticus (strain ATCC 15305 / DSM 20229 / NCIMB 8711 / NCTC 7292 / S-41)).